Reading from the N-terminus, the 199-residue chain is Imidazoleglycerol-phosphate dehydratase (199 aa).

It belongs to the imidazoleglycerol-phosphate dehydratase family.

The protein localises to the cytoplasm. It catalyses the reaction D-erythro-1-(imidazol-4-yl)glycerol 3-phosphate = 3-(imidazol-4-yl)-2-oxopropyl phosphate + H2O. The protein operates within amino-acid biosynthesis; L-histidine biosynthesis; L-histidine from 5-phospho-alpha-D-ribose 1-diphosphate: step 6/9. The sequence is that of Imidazoleglycerol-phosphate dehydratase from Rhodospirillum rubrum (strain ATCC 11170 / ATH 1.1.1 / DSM 467 / LMG 4362 / NCIMB 8255 / S1).